The following is a 133-amino-acid chain: Secretin (133 aa).

Positions 1-22 are cleaved as a signal peptide; the sequence is MEPPLPTPMLLLLLLLLSSSAA. Residues 23 to 30 constitute a propeptide that is removed on maturation; sequence LPAPPRTP. Val58 bears the Valine amide mark. Residue Ser62 is modified to Phosphoserine. Positions 62–133 are excised as a propeptide; that stretch reads SEQDTENIPE…EWTETTRPPR (72 aa).

This sequence belongs to the glucagon family. Highly expressed in the intestine. Also expressed in the hippocampus, cerebellum and the brain stem in adult mouse brain. In the hippocampus, expressed in the dentate gyrus, the hilus and the molecular layer.

Its subcellular location is the secreted. In terms of biological role, hormone involved in different processes, such as regulation of the pH of the duodenal content, food intake and water homeostasis. Exerts its biological effects by binding to secretin receptor (SCTR), a G-protein coupled receptor expressed in the basolateral domain of several cells. Acts as a key gastrointestinal hormone by regulating the pH of the duodenal content. Secreted by S cells of the duodenum in the crypts of Lieberkuehn and regulates the pH of the duodenum by (1) inhibiting the secretion of gastric acid from the parietal cells of the stomach and (2) stimulating the production of bicarbonate (NaHCO(3)) from the ductal cells of the pancreas. Production of bicarbonate is essential to neutralize the pH and ensure no damage is done to the small intestine by the gastric acid. In addition to regulating the pH of the duodenal content, plays a central role in diet induced thermogenesis: acts as a non-sympathetic brown fat (BAT) activator mediating prandial thermogenesis, which consequentially induces satiation. Mechanistically, secretin released by the gut after a meal binds to secretin receptor (SCTR) in brown adipocytes, activating brown fat thermogenesis by stimulating lipolysis, which is sensed in the brain and promotes satiation. Also able to stimulate lipolysis in white adipocytes. Also plays an important role in cellular osmoregulation: released into the systemic circulation in response to hyperosmolality and acts at different levels in the hypothalamus, pituitary and kidney to regulate water homeostasis. Also plays a role in the central nervous system, possibly by acting as a neuropeptide hormone: required for hippocampal synaptic function and neural progenitor cells maintenance. The protein is Secretin of Mus musculus (Mouse).